The following is a 92-amino-acid chain: Small ribosomal subunit protein uS19 (92 aa).

It belongs to the universal ribosomal protein uS19 family.

Functionally, protein S19 forms a complex with S13 that binds strongly to the 16S ribosomal RNA. The sequence is that of Small ribosomal subunit protein uS19 from Bradyrhizobium sp. (strain BTAi1 / ATCC BAA-1182).